We begin with the raw amino-acid sequence, 408 residues long: S-adenosylmethionine synthase (408 aa).

An ATP-binding site is contributed by His19. Asp21 contacts Mg(2+). A K(+)-binding site is contributed by Glu47. Glu60 and Gln104 together coordinate L-methionine. The interval 104-114 (QSPEIASGVDH) is flexible loop. Residues 185–187 (DAK), 255–256 (RF), Asp264, 270–271 (RK), Ala287, and Lys291 each bind ATP. Asp264 lines the L-methionine pocket. Lys295 is a binding site for L-methionine.

This sequence belongs to the AdoMet synthase family. Homotetramer; dimer of dimers. Mg(2+) serves as cofactor. The cofactor is K(+).

The protein localises to the cytoplasm. The enzyme catalyses L-methionine + ATP + H2O = S-adenosyl-L-methionine + phosphate + diphosphate. It participates in amino-acid biosynthesis; S-adenosyl-L-methionine biosynthesis; S-adenosyl-L-methionine from L-methionine: step 1/1. Functionally, catalyzes the formation of S-adenosylmethionine (AdoMet) from methionine and ATP. The overall synthetic reaction is composed of two sequential steps, AdoMet formation and the subsequent tripolyphosphate hydrolysis which occurs prior to release of AdoMet from the enzyme. This is S-adenosylmethionine synthase from Deinococcus radiodurans (strain ATCC 13939 / DSM 20539 / JCM 16871 / CCUG 27074 / LMG 4051 / NBRC 15346 / NCIMB 9279 / VKM B-1422 / R1).